The primary structure comprises 774 residues: Potassium/sodium hyperpolarization-activated cyclic nucleotide-gated channel 3 (774 aa).

The disordered stretch occupies residues 1 to 48; it reads MEAEQRPAAGASEGATPGLEAVPPVAPPPATAASGPIPKSGPEPKRRH. At 1–97 the chain is on the cytoplasmic side; that stretch reads MEAEQRPAAG…PYSDFRFYWD (97 aa). Positions 46–91 are involved in subunit assembly; that stretch reads RRHLGTLLQPTVNKFSLRVFGSHKAVEIEQERVKSAGAWIIHPYSD. The chain crosses the membrane as a helical span at residues 98–118; the sequence is LIMLLLMVGNLIVLPVGITFF. Over 119–124 the chain is Extracellular; the sequence is KEENSP. Residues 125–145 traverse the membrane as a helical segment; sequence PWIVFNVLSDTFFLLDLVLNF. At 146 to 171 the chain is on the cytoplasmic side; it reads RTGIVVEEGAEILLAPRAIRTRYLRT. A helical membrane pass occupies residues 172-192; that stretch reads WFLVDLISSIPVDYIFLVVEL. Residues 193–201 lie on the Extracellular side of the membrane; it reads EPRLDAEVY. A helical; Voltage-sensor membrane pass occupies residues 202–222; it reads KTARALRIVRFTKILSLLRLL. At 223–253 the chain is on the cytoplasmic side; sequence RLSRLIRYIHQWEEIFHMTYDLASAVVRIFN. The helical transmembrane segment at 254–274 threads the bilayer; it reads LIGMMLLLCHWDGCLQFLVPM. The Extracellular segment spans residues 275-297; sequence LQDFPPDCWVSINHMVNHSWGRQ. An N-linked (GlcNAc...) asparagine glycan is attached at Asn-291. Residues 298–319 constitute an intramembrane region (pore-forming); it reads YSHALFKAMSHMLCIGYGQQAP. The Extracellular segment spans residues 320 to 329; that stretch reads VGMPDVWLTM. A helical transmembrane segment spans residues 330-350; the sequence is LSMIVGATCYAMFIGHATALI. Topologically, residues 351–774 are cytoplasmic; that stretch reads QSLDSSRRQY…PRGLQLSANM (424 aa). An interaction with KCTD3 region spans residues 354-774; it reads DSSRRQYQEK…PRGLQLSANM (421 aa). Positions 492, 493, 495, 502, 503, 543, and 546 each coordinate 3',5'-cyclic AMP. Ser-634 bears the Phosphoserine mark. The disordered stretch occupies residues 682–774; that stretch reads SLSRAGRSQV…PRGLQLSANM (93 aa). Residues 751-763 show a composition bias toward pro residues; the sequence is TAQPPRPPVPEPA.

The protein belongs to the potassium channel HCN family. Homotetramer. The potassium channel is composed of a homo- or heterotetrameric complex of pore-forming subunits. Interacts with HCN11. Interacts with KCTD3; this interaction increases cell surface expression and current density of this channel. Interacts with PEX5L. In terms of tissue distribution, detected in brain.

The protein resides in the cell membrane. The catalysed reaction is K(+)(in) = K(+)(out). It carries out the reaction Na(+)(in) = Na(+)(out). Its activity is regulated as follows. Unlike HCN2 and HCN4, HCN3 is insensitive to cyclic nucleotides, such as cAMP or cGMP. This lack of sensitivity of HCN3, despite harboring a functional cyclic nucleotide-binding domain (CNBD), may be explained by its shorter C-terminal sequence, which may alter the normal autoinhibition of the channel. Inhibited by Cs(1+) and ZD7288. Phosphatidylinositol-4,5-bisphosphate (PIP(2)) shifts HCN3 activation to more depolarized potentials and accelerated activation kinetics. Hyperpolarization-activated ion channel that are permeable to sodium and potassium ions, with an about 3:1 preference for potassium ions. Contributes to the native pacemaker currents in heart (If) and in neurons (Ih). In particular, plays a pivotal role in maintaining excitability and promoting rhythmic burst firing within hypothalamic nuclei. Exerts a significant influence on the configuration of the cardiac action potential waveform. Does not appear to play a prominent role in the processing of acute, neuropathic, or inflammatory pain. The protein is Potassium/sodium hyperpolarization-activated cyclic nucleotide-gated channel 3 (HCN3) of Homo sapiens (Human).